A 206-amino-acid chain; its full sequence is Halorhodopsin (206 aa).

The chain crosses the membrane as a helical span at residues 1–15 (IALAGLSILLFVYMG). Residues 16-21 (RNVEDP) lie on the Cytoplasmic side of the membrane. Residues 22–45 (RAQLIFVATLMVPLVSISSYTGLV) traverse the membrane as a helical segment. The Extracellular segment spans residues 46–75 (SGLTVGFLEMPAGHALAGMGAGPEGGVFTP). The helical transmembrane segment at 76-97 (WGRYLTWAFSTPMILIALGLLA) threads the bilayer. The Cytoplasmic portion of the chain corresponds to 98-100 (GSN). A helical transmembrane segment spans residues 101–124 (MSKLFTAVVADVGMCITGLAAALT). At 125-127 (TSS) the chain is on the extracellular side. Residues 128-150 (YLLRWVWYGISCAFFVVVLYILL) form a helical membrane-spanning segment. Topologically, residues 151–162 (AEWAKDAEVAGT) are cytoplasmic. Residues 163 to 186 (ADIFNTLKVLTVVLWLGYPIFWAL) traverse the membrane as a helical segment. At 187 to 195 (GAEGLAVLD) the chain is on the extracellular side. A helical membrane pass occupies residues 196–206 (IAITSWAYSGM).

Belongs to the archaeal/bacterial/fungal opsin family.

Its subcellular location is the cell membrane. Functionally, light-driven chloride pump. The sequence is that of Halorhodopsin (hop) from Halobacterium halobium (strain mex).